We begin with the raw amino-acid sequence, 403 residues long: Phosphoglycerate kinase (403 aa).

Substrate contacts are provided by residues 21–23, arginine 36, 59–62, arginine 119, and arginine 154; these read DFN and HVGR. Residues lysine 207, glycine 299, glutamate 330, and 357–360 each bind ATP; that span reads GGDA.

This sequence belongs to the phosphoglycerate kinase family. As to quaternary structure, monomer.

The protein localises to the cytoplasm. The catalysed reaction is (2R)-3-phosphoglycerate + ATP = (2R)-3-phospho-glyceroyl phosphate + ADP. Its pathway is carbohydrate degradation; glycolysis; pyruvate from D-glyceraldehyde 3-phosphate: step 2/5. This chain is Phosphoglycerate kinase (pgk), found in Chlamydia trachomatis serovar D (strain ATCC VR-885 / DSM 19411 / UW-3/Cx).